The chain runs to 272 residues: Thiazole synthase (272 aa).

Lysine 111 serves as the catalytic Schiff-base intermediate with DXP. Residues glycine 172, 198-199 (AG), and 220-221 (NS) contribute to the 1-deoxy-D-xylulose 5-phosphate site. Residues 249-272 (SGRLPRRDQASASSPTTGLVQSPQ) form a disordered region. The span at 258-272 (ASASSPTTGLVQSPQ) shows a compositional bias: polar residues.

It belongs to the ThiG family. Homotetramer. Forms heterodimers with either ThiH or ThiS.

The protein resides in the cytoplasm. It carries out the reaction [ThiS sulfur-carrier protein]-C-terminal-Gly-aminoethanethioate + 2-iminoacetate + 1-deoxy-D-xylulose 5-phosphate = [ThiS sulfur-carrier protein]-C-terminal Gly-Gly + 2-[(2R,5Z)-2-carboxy-4-methylthiazol-5(2H)-ylidene]ethyl phosphate + 2 H2O + H(+). Its pathway is cofactor biosynthesis; thiamine diphosphate biosynthesis. Functionally, catalyzes the rearrangement of 1-deoxy-D-xylulose 5-phosphate (DXP) to produce the thiazole phosphate moiety of thiamine. Sulfur is provided by the thiocarboxylate moiety of the carrier protein ThiS. In vitro, sulfur can be provided by H(2)S. The polypeptide is Thiazole synthase (Synechococcus sp. (strain CC9605)).